A 383-amino-acid polypeptide reads, in one-letter code: Hippurate hydrolase (383 aa).

The protein belongs to the peptidase M20 family.

It catalyses the reaction N-benzoylglycine + H2O = benzoate + glycine. Functionally, cleaves hippuric acid into benzoic acid and glycine. This is Hippurate hydrolase from Campylobacter jejuni subsp. jejuni serotype O:2 (strain ATCC 700819 / NCTC 11168).